The sequence spans 348 residues: Protein RecA (348 aa).

64-71 provides a ligand contact to ATP; the sequence is GPESSGKT. Over residues 325–335 the composition is skewed to basic and acidic residues; sequence YEIDGANKEPL. The segment at 325-348 is disordered; sequence YEIDGANKEPLEETEETLSLLDDE. The segment covering 336 to 348 has biased composition (acidic residues); the sequence is EETEETLSLLDDE.

The protein belongs to the RecA family.

The protein localises to the cytoplasm. Functionally, can catalyze the hydrolysis of ATP in the presence of single-stranded DNA, the ATP-dependent uptake of single-stranded DNA by duplex DNA, and the ATP-dependent hybridization of homologous single-stranded DNAs. It interacts with LexA causing its activation and leading to its autocatalytic cleavage. The protein is Protein RecA of Listeria welshimeri serovar 6b (strain ATCC 35897 / DSM 20650 / CCUG 15529 / CIP 8149 / NCTC 11857 / SLCC 5334 / V8).